The sequence spans 599 residues: Sulfite reductase [NADPH] flavoprotein alpha-component (599 aa).

Residues V64–V202 enclose the Flavodoxin-like domain. FMN contacts are provided by residues S70 to A75, S117 to G120, and L153 to C162. Residues D234–P448 enclose the FAD-binding FR-type domain. FAD contacts are provided by residues T322, A356, R386–S389, T404–G406, Y410, and G419–S422. Residues S519 to R520, K525 to Q529, and D561 each bind NADP(+). Y599 is a binding site for FAD.

Belongs to the NADPH-dependent sulphite reductase flavoprotein subunit CysJ family. This sequence in the N-terminal section; belongs to the flavodoxin family. It in the C-terminal section; belongs to the flavoprotein pyridine nucleotide cytochrome reductase family. Alpha(8)-beta(8). The alpha component is a flavoprotein, the beta component is a hemoprotein. It depends on FAD as a cofactor. Requires FMN as cofactor.

It catalyses the reaction hydrogen sulfide + 3 NADP(+) + 3 H2O = sulfite + 3 NADPH + 4 H(+). It participates in sulfur metabolism; hydrogen sulfide biosynthesis; hydrogen sulfide from sulfite (NADPH route): step 1/1. Functionally, component of the sulfite reductase complex that catalyzes the 6-electron reduction of sulfite to sulfide. This is one of several activities required for the biosynthesis of L-cysteine from sulfate. The flavoprotein component catalyzes the electron flow from NADPH -&gt; FAD -&gt; FMN to the hemoprotein component. The chain is Sulfite reductase [NADPH] flavoprotein alpha-component from Salmonella typhi.